The sequence spans 3419 residues: Utrophin (3419 aa).

The actin-binding stretch occupies residues 1-246; that stretch reads MAKYGHLEAS…LPDKKSIIMY (246 aa). A Phosphotyrosine modification is found at Tyr-4. A Phosphoserine modification is found at Ser-10. Calponin-homology (CH) domains are found at residues 31-135 and 150-255; these read DVQK…LHWQ and TNSE…EVLP. The interaction with SYNM stretch occupies residues 268-905; the sequence is TLPRKYKKEC…YQQQLENELK (638 aa). The residue at position 295 (Ser-295) is a Phosphoserine. 17 Spectrin repeats span residues 312–416, 421–525, 532–636, 690–795, 801–901, 910–1012, 1019–1121, 1128–1229, 1236–1333, 1335–1436, 1438–1540, 1547–1648, 1653–1747, 1748–1840, 1841–1958, 1969–2070, and 2077–2176; these read DSYQ…SRLH, ELQK…NRLQ, QELL…NQVT, KKFD…RKIQ, NAYF…QQLE, PAYL…RSLE, RDFK…SRLS, MNLK…HTLE, VELL…ISLE, QLQV…LFQK, ANFE…QDLE, RKLK…NTLL, QLEV…INSA, QMLI…KIKA, IPQR…SDRR, KQFH…PRLK, and SGYR…KTRT. Residues 1336 to 1761 are interaction with SYNM; sequence LQVLRETDHM…GQDPAGTVEA (426 aa). At Ser-1998 the chain carries Phosphoserine. Ser-2201 is modified (phosphoserine). 5 Spectrin repeats span residues 2216 to 2319, 2336 to 2426, 2433 to 2542, 2549 to 2674, and 2681 to 2783; these read ADLD…QQLE, EELM…SALE, QTSR…AHLE, NRLL…KQVG, and RDLQ…KQLQ. The disordered stretch occupies residues 2616 to 2640; it reads DQPIEAPEEPRRNPQSKTELTPEER. The tract at residues 2785-3152 is interaction with SYNM; the sequence is AHRDFGPSSQ…TVLEGDNLET (368 aa). Residues 2799–2832 enclose the WW domain; the sequence is TSVQLPWQRSISHNKVPYYINHQTQTTCWDHPKM. Residues 3052 to 3108 form a ZZ-type; degenerate zinc finger; it reads KHQAKCNICKECPIVGFRYRSLKHFNYDVCQSCFFSGRTAKGHKLHYPMVEYCIPTT. Zn(2+) contacts are provided by Cys-3057, Cys-3060, Cys-3081, and Cys-3084. 2 disordered regions span residues 3277–3296 and 3344–3395; these read RRGLPLGSPPDSIVSPYHTS and DSDS…TDLT. Position 3284 is a phosphoserine (Ser-3284).

Homodimer. Interacts with the syntrophins SNTA1; SNTB1 and SNTB2. Interacts with SYNM. Interacts (via its WWW and ZZ domains) with DAG1 (via the PPXY motif of betaDAG1); the interaction is inhibited by the tyrosine phosphorylation of the PPXY motif of DAG1. Interacts with DTNB. Interacts with PGM5.

Its subcellular location is the postsynaptic cell membrane. The protein resides in the cytoplasm. It localises to the cytoskeleton. May play a role in anchoring the cytoskeleton to the plasma membrane. The polypeptide is Utrophin (Rattus norvegicus (Rat)).